We begin with the raw amino-acid sequence, 256 residues long: Homeobox protein ceh-34 (256 aa).

The homeobox DNA-binding region spans 134–193 (GEETNYCFKSKSRNVLRDAYKKCQYPSVEDKRRLAQQTELSIIQVSNWFKNKRQRERAAG). Residues 187 to 233 (QRERAAGQLDRSSARSNDSDDGSSGCESKPPMNIDSPAPPPLPTSFD) are disordered.

Belongs to the SIX/Sine oculis homeobox family. In terms of assembly, interacts (via N-terminus) with eya-1 (via C-terminus). As to expression, shows expression only in the pharyngeal nervous system.

The protein resides in the nucleus. In terms of biological role, acts as a transcription regulator. Binds to the sequence motif 5'-TCAGGTT-3'. Binds to the cis-regulatory element of proapoptotic factor egl-1 gene and together with eya-1 activates egl-1 expression to promote motor neuron M4 sister cell apoptosis. Also promotes apoptosis of I1 pharyngeal neuron sister cell. Together with eya-1, required to specify the coelomocyte fate in embryonic and postembryonic precursors. Required to establish and maintain the differentiation of all 14 classes of pharyngeal neurons. Controls the neurotransmitter signaling capacity of the neurons and is required for the expression of some neurotransmitter receptors including mgl-1, glr-2 and ser-7. Affects the neuropeptidergic identity of pharyngeal neurons. Required for the pharyngeal expression of sensory receptors gur-3, glu-7 and str-97, antimicrobial defense genes such as spp-12, gpla-1/flr-2 and htrl-1, and pan-pharyngeal nervous system genes such as kin-36. Required to establish and maintain pharyngeal nervous system architecture by ensuring correct axon and synapse organization. Required for expression of eya-1 which may act as a transcriptional cofactor to specify distinct pharyngeal neuron types. Cooperates with several homeobox proteins to specify distinct pharyngeal neuron types including unc-86 in the NSM and I1 neurons, ceh-14 in the I2 neuron, ceh-2 and pros-1 in the I3 neuron, ceh-45 in the M1 neuron, ceh-2 in the M3 neuron, ceh-28 and zag-1 in the M4 neuron, and vab-15 in the M5 neuron. The chain is Homeobox protein ceh-34 (ceh-34) from Caenorhabditis elegans.